The sequence spans 605 residues: Elongation factor 4 (605 aa).

One can recognise a tr-type G domain in the interval lysine 10 to histidine 192. GTP is bound by residues aspartate 22–threonine 27 and asparagine 139–aspartate 142.

It belongs to the TRAFAC class translation factor GTPase superfamily. Classic translation factor GTPase family. LepA subfamily.

Its subcellular location is the cell inner membrane. The enzyme catalyses GTP + H2O = GDP + phosphate + H(+). Its function is as follows. Required for accurate and efficient protein synthesis under certain stress conditions. May act as a fidelity factor of the translation reaction, by catalyzing a one-codon backward translocation of tRNAs on improperly translocated ribosomes. Back-translocation proceeds from a post-translocation (POST) complex to a pre-translocation (PRE) complex, thus giving elongation factor G a second chance to translocate the tRNAs correctly. Binds to ribosomes in a GTP-dependent manner. This is Elongation factor 4 from Chelativorans sp. (strain BNC1).